The sequence spans 342 residues: Isopentenyl-diphosphate delta-isomerase (342 aa).

11 to 12 (RK) contacts substrate. Residues serine 68, 69–71 (SMT), serine 99, and asparagine 127 each bind FMN. A substrate-binding site is contributed by 99–101 (SMR). Substrate is bound at residue glutamine 162. Residue glutamate 163 participates in Mg(2+) binding. Residues lysine 194, threonine 224, 274-276 (GLK), and 295-296 (AG) contribute to the FMN site.

The protein belongs to the IPP isomerase type 2 family. As to quaternary structure, homooctamer. Dimer of tetramers. Requires FMN as cofactor. The cofactor is NADPH. It depends on Mg(2+) as a cofactor.

The protein resides in the cytoplasm. The catalysed reaction is isopentenyl diphosphate = dimethylallyl diphosphate. In terms of biological role, involved in the biosynthesis of isoprenoids. Catalyzes the 1,3-allylic rearrangement of the homoallylic substrate isopentenyl (IPP) to its allylic isomer, dimethylallyl diphosphate (DMAPP). The chain is Isopentenyl-diphosphate delta-isomerase from Rickettsia africae (strain ESF-5).